Consider the following 1575-residue polypeptide: Laminin subunit gamma-3 (1575 aa).

The N-terminal stretch at Met-1–Gly-19 is a signal peptide. The 240-residue stretch at Arg-31–Arg-270 folds into the Laminin N-terminal domain. Asn-87 and Asn-119 each carry an N-linked (GlcNAc...) asparagine glycan. Cystine bridges form between Cys-271-Cys-280, Cys-273-Cys-290, Cys-292-Cys-301, Cys-304-Cys-324, Cys-327-Cys-336, Cys-329-Cys-352, Cys-355-Cys-364, Cys-367-Cys-380, Cys-383-Cys-395, Cys-385-Cys-401, Cys-403-Cys-412, Cys-415-Cys-427, Cys-430-Cys-441, Cys-432-Cys-448, Cys-450-Cys-459, and Cys-462-Cys-477. 4 Laminin EGF-like domains span residues Cys-271–Pro-326, Cys-327–Pro-382, Cys-383–Pro-429, and Cys-430–Ser-479. An N-linked (GlcNAc...) asparagine glycan is attached at Asn-295. An N-linked (GlcNAc...) asparagine glycan is attached at Asn-328. The Laminin EGF-like 5; first part domain maps to Cys-480–Cys-489. The Laminin IV type A domain maps to His-499–Ile-672. Asn-631 is a glycosylation site (N-linked (GlcNAc...) asparagine). The region spanning Cys-673–Pro-706 is the Laminin EGF-like 5; second part domain. Disulfide bonds link Cys-707–Cys-715, Cys-709–Cys-722, Cys-724–Cys-733, Cys-736–Cys-752, Cys-755–Cys-763, Cys-757–Cys-774, Cys-777–Cys-786, Cys-789–Cys-807, Cys-810–Cys-824, Cys-812–Cys-831, Cys-834–Cys-843, Cys-846–Cys-863, Cys-866–Cys-880, Cys-868–Cys-887, Cys-889–Cys-898, Cys-901–Cys-914, Cys-917–Cys-929, Cys-919–Cys-936, Cys-938–Cys-947, Cys-950–Cys-962, Cys-965–Cys-977, Cys-967–Cys-983, Cys-985–Cys-994, and Cys-997–Cys-1010. Laminin EGF-like domains are found at residues Cys-707 to Pro-754, Cys-755 to Gln-809, Cys-810 to Pro-865, Cys-866 to Ser-916, Cys-917 to Ala-964, and Cys-965 to Cys-1013. Asn-837 carries an N-linked (GlcNAc...) asparagine glycan. Asn-980 is a glycosylation site (N-linked (GlcNAc...) asparagine). The interval Pro-1014–Gln-1575 is domain II and I. The short motif at Arg-1059 to Asp-1061 is the Cell attachment site element. Residues Arg-1073 to Ala-1134 adopt a coiled-coil conformation. Asn-1185 carries an N-linked (GlcNAc...) asparagine glycan. Residues Leu-1201–Val-1228 are a coiled coil. The interval Lys-1378–Arg-1399 is disordered. Coiled coils occupy residues Lys-1410–Leu-1492 and Gly-1523–Leu-1567.

As to quaternary structure, laminin is a complex glycoprotein, consisting of three different polypeptide chains (alpha, beta, gamma), which are bound to each other by disulfide bonds into a cross-shaped molecule comprising one long and three short arms with globules at each end. Gamma-3 is a subunit of laminin-12 (laminin-213), laminin-14 (laminin-423) and laminin-15 (laminin-523). Broadly expressed in: skin, heart, lung, and the reproductive tracts.

It is found in the secreted. It localises to the extracellular space. The protein resides in the extracellular matrix. The protein localises to the basement membrane. Functionally, binding to cells via a high affinity receptor, laminin is thought to mediate the attachment, migration and organization of cells into tissues during embryonic development by interacting with other extracellular matrix components. The polypeptide is Laminin subunit gamma-3 (LAMC3) (Homo sapiens (Human)).